The following is an 89-amino-acid chain: Antimicrobial peptide Ar-AMP (89 aa).

The first 25 residues, 1 to 25 (MVNMKSVALIVIVMMAFMMVDPSMG), serve as a signal peptide directing secretion. The Chitin-binding type-1 domain maps to 26-68 (AGECVQGRCPSGMCCSQFGYCGRGPKYCGRASTTVDHQADAAA). 3 cysteine pairs are disulfide-bonded: Cys29–Cys40, Cys34–Cys46, and Cys39–Cys53. A propeptide spans 56-89 (ASTTVDHQADAAAAAATKTANNPTDAKLAGAGSP) (removed in mature form).

In terms of biological role, chitin-binding protein that inhibits the growth of the fungal pathogens B.cinerea, F.culmorum, H.sativum and A.consortiale, but not that of R.solani. Induces morphological changes in the fungal pathogens F.culmorum, H.sativum and R.solani, but not in A.consortiale and B.cinerea. Has antibacterial activity against the Gram-positive bacterium B.subtilis, but lacks antibacterial activity against the Gram-negative bacterium E.coli. The polypeptide is Antimicrobial peptide Ar-AMP (Amaranthus retroflexus (Redroot amaranth)).